The chain runs to 959 residues: MTVKCANDLDTHTKPPFVARMIHRFAVPIILVWLAIAVTVSVFIPSLEDVGQERSVSLSPKDAPSYIAMQKMGQVFNEGNSDSVIMIVLEGDKPLGDDAHRFYDGLIRKLRADKHVQSVQDFWGDPLTAPGAQSNDGKAAYVQLSLAGNQGELLAQESIDAVRKIVVQTPAPPGITAWVTGASALIADMHHSGDKSMIRITATSVIVILVTLLLVYRSFITVILLLFTVGIESAVARGVVALLGHTGLIGLSTFAVNLLTSLAIAAGTDYGIFITGRYQEARQANENKEAAFYTMYRGTFHVILGSGLTISGATFCLSFARMPYFQTLGVPCAVGMLIAVAVALTLGPAVLTVGSRFGLFEPKRLIKVRGWRRIGTVVVRWPLPILITTCAIAMVGLLALPGYRTNYKDRAYLPASIPANQGFAAADRHFPQARMKPEILMIESDHDMRNPADFLILDKLARGIFRVPGISRVQAITRPDGTAMDHTSIPFQISMQNAGQVQTMKYQKDRMNDLLRQAENMAETIASMRRMHQLMALLTENTHHILNDTVEMQKTTSKLRDEIANFDDFWRPIRSYFYWERHCFNIPICWSFRSIFDALDGVDQIDERLNSIVGDIKNMDLLMPQMLEQFPPMIESMESMRTIMLTMHSTMSGIFDQMNELSDNANTMGKAFDTAKNDDSFYLPPEVFKNTDFKRAMKSFLSSDGHAARFIILHRGDPASVAGIASINAIRTAAEEALKGTPLEDTKIYLAGTAAVFKDIDEGANWDLVIAGISSLCLIFIIMLIITRAFVAAAVIVGTVALSLGASFGLSVLLWQHILGIELHYLVLAMSVIVLLAVGSDYNLLLVSRFKQEIQAGLKTGIIRSMGGTGKVVTNAGLVFAFTMASMVVSDLRVIGQVGTTIGLGLLFDTLIVRSFMMPSIAALLGRWFWWPQQGRTRPLLTVAAPVGLPPDRSLVYSD.

A run of 11 helical transmembrane segments spans residues 25 to 45, 205 to 225, 239 to 259, 300 to 320, 333 to 353, 381 to 401, 766 to 786, 790 to 810, 818 to 838, 872 to 892, and 902 to 922; these read FAVP…VFIP, VIVI…VILL, VVAL…VNLL, FHVI…LSFA, AVGM…VLTV, WPLP…LALP, WDLV…MLII, FVAA…SFGL, ILGI…LLAV, VVTN…VSDL, and IGLG…PSIA.

Belongs to the resistance-nodulation-cell division (RND) (TC 2.A.6) family. MmpL subfamily.

Its subcellular location is the cell membrane. This Mycobacterium leprae (strain TN) protein is Probable transport protein MmpL4 (mmpL4).